Consider the following 1358-residue polypeptide: MGNQLAGIAPSQILSVESYFSDIHDFEYDKSLGSTRFFKVARAKHREGLVVVKVFAIQDPTLPLTSYKQELEELKIRLHSAQNCLPFQKAAEKASEKAAMLFRQYVRDNLYDRISTRPFLNNIEKRWIAFQILTAVDQAHKSGVRHGDIKTENVMVTSWNWVLLTDFASFKPTYLPEDNPADFNYFFDTSRRRTCYIAPERFVDGGMFATELEYMRDPSTPLVDLNSNQRTRGELKRAMDIFSAGCVIAELFTEGVPLFDLSQLLAYRNGHFFPEQVLNKIEDRSIRELVTQMIQREPGQRLEADDYLKQQRGNAFPEVFYTFLQPYMAQFAKETFLSADERILVIRKDLGNIIHNLCGHDLPEKAEGESKASGLVVLVSVITSCLQTLKSCDSKLAALELILHLAPRLSVEILLDRITPYLLHFSNNSVPRVRAEALRTLTKVLALVQEVPRNDVNIYPEYILPGIAHLAQDDATIVRLAYAENIALLAETALRFLELVQLKTLNMENEPDSEEVDEATRPNGDYDTELQALHEMVQQKVVTLLSDPENIVKQTLMENGITRLCVFFGRQKANDVLLSHMITFLNDKNDWHLRGAFFDSIVGVAAYVGWQSSSILKPLLQQGLSDAEEFVIVKALNALTCMCQLGLLQKPHVYEFASDIAPFLCHPNLWIRYGAVGFITVVAHQISTADVYCKLMPYLDPYITQPVIQIERKLVLLSVLKEPVSRSIFDYALRSKDIASLFRHLHMRQKKRNGSLLDCPPPEDPAIAQLLKKLLSQGMTEEEEDKLLALKDFMMKSNRAKANAVDQSHLHDSSQKGVIDLAALGITGRQVDLVKTKQEPDEKRARKHVKQDSNVNEEWKSMFGSLEPPNIPQALPKTSDHEVVPTGKSPRSESSAGVCVPLSTSPQVSEAAHIPSKKPVIPVVSSTVLPSTYQIRITTCKTELQQLIQQKREQCNAERIAKQMMENAEWESKPPPPGWRPKGLLVAHLHEHKSAVNRIRVSDEHLLFATCSNDGTVKIWNSQKMEGKTTTTRSILTYSRIGGRVKTLTFCQGSHYLAIASDNGAVQLLGIEASKLPKSPKIHPLQSRILDQKEDGCVVDMHHFNSGAQSVLAYATVNGSLVGWDLRSSSNAWTLKHDLKSGLITSFAVDIHQCWLCIGTSSGAMACWDMRFQLPISSHCHPSRARIRRLSMHPLYQSWVIAAVQGNNEVSMWDMETGDRRLTLWASSAPPLSELQPSPHSVHGIYCSPADGNPILLTAGSDMKIRFWDLVSPERSYVVAGSTGSPSVSYYKKIIEGTEVVQEIQNKQKVGPSDDTPRRGPESLPVGHHDIITDIATFQTTQGFIVTASRDGIVKVWK.

A lipid anchor (N-myristoyl glycine) is attached at Gly-2. One can recognise a Protein kinase domain in the interval 26–324; it reads FEYDKSLGST…AFPEVFYTFL (299 aa). Residues 32–40 and Lys-53 each bind ATP; that span reads LGSTRFFKV. Asp-148 functions as the Proton acceptor in the catalytic mechanism. HEAT repeat units lie at residues 413 to 450, 458 to 495, 572 to 610, and 612 to 648; these read ILLDRITPYLLHFSNNSVPRVRAEALRTLTKVLALVQE, IYPEYILPGIAHLAQDDATIVRLAYAENIALLAETALR, KANDVLLSHMITFLNDKNDWHLRGAFFDSIVGVAAYVGW, and SSSILKPLLQQGLSDAEEFVIVKALNALTCMCQLGLL. Phosphoserine occurs at positions 808, 813, 853, and 865. Residues 875–899 are disordered; that stretch reads LPKTSDHEVVPTGKSPRSESSAGVC. WD repeat units lie at residues 991–1030, 1040–1079, 1093–1134, 1139–1178, 1182–1223, and 1237–1278; these read EHKSAVNRIRVSDEHLLFATCSNDGTVKIWNSQKMEGKTT, RIGGRVKTLTFCQGSHYLAIASDNGAVQLLGIEASKLPKS, KEDG…NAWT, LKSGLITSFAVDIHQCWLCIGTSSGAMACWDMRFQLPISS, PSRA…RRLT, and PSPH…RSYV. Residues 1307-1326 form a disordered region; sequence KQKVGPSDDTPRRGPESLPV. Residues 1315 to 1326 are compositionally biased toward basic and acidic residues; that stretch reads DTPRRGPESLPV. The residue at position 1316 (Thr-1316) is a Phosphothreonine. Residues 1327 to 1358 form a WD 7 repeat; the sequence is GHHDIITDIATFQTTQGFIVTASRDGIVKVWK.

This sequence belongs to the protein kinase superfamily. Ser/Thr protein kinase family. In terms of assembly, component of the PI3K (PI3KC3/PI3K-III/class III phosphatidylinositol 3-kinase) complex the core of which is composed of the catalytic subunit PIK3C3, the regulatory subunit PIK3R4 and BECN1 associating with additional regulatory/auxiliary subunits to form alternative complex forms. Alternative complex forms containing a fourth regulatory subunit in a mutually exclusive manner are PI3K complex I (PI3KC3-C1) containing ATG14, and PI3K complex II (PI3KC3-C2) containing UVRAG. PI3KC3-C1 displays a V-shaped architecture with PIK3R4 serving as a bridge between PIK3C3 and the ATG14:BECN1 subcomplex. Both, PI3KC3-C1 and PI3KC3-C2, can associate with further regulatory subunits, such as RUBCN, SH3GLB1/Bif-1, AMBRA1 and NRBF2. PI3KC3-C1 probably associates with PIK3CB. Interacts with RAB7A in the presence of PIK3C3/VPS34. Interacts with NRBF2. Interacts with ARMC3. It depends on Mn(2+) as a cofactor. Myristoylated. In terms of processing, probably autophosphorylated.

The protein resides in the late endosome. It is found in the cytoplasmic vesicle. The protein localises to the autophagosome. It localises to the membrane. It catalyses the reaction L-seryl-[protein] + ATP = O-phospho-L-seryl-[protein] + ADP + H(+). The catalysed reaction is L-threonyl-[protein] + ATP = O-phospho-L-threonyl-[protein] + ADP + H(+). Functionally, regulatory subunit of the PI3K complex that mediates formation of phosphatidylinositol 3-phosphate; different complex forms are believed to play a role in multiple membrane trafficking pathways: PI3KC3-C1 is involved in initiation of autophagosomes and PI3KC3-C2 in maturation of autophagosomes and endocytosis. Involved in regulation of degradative endocytic trafficking and cytokinesis, probably in the context of PI3KC3-C2. The polypeptide is Phosphoinositide 3-kinase regulatory subunit 4 (Pik3r4) (Rattus norvegicus (Rat)).